A 55-amino-acid chain; its full sequence is ATP synthase F(0) complex subunit 8 (55 aa).

A helical transmembrane segment spans residues 4 to 24 (LNPHPWFSIFITSWLILIIIL).

This sequence belongs to the ATPase protein 8 family. As to quaternary structure, component of the ATP synthase complex composed at least of ATP5F1A/subunit alpha, ATP5F1B/subunit beta, ATP5MC1/subunit c (homooctomer), MT-ATP6/subunit a, MT-ATP8/subunit 8, ATP5ME/subunit e, ATP5MF/subunit f, ATP5MG/subunit g, ATP5MK/subunit k, ATP5MJ/subunit j, ATP5F1C/subunit gamma, ATP5F1D/subunit delta, ATP5F1E/subunit epsilon, ATP5PF/subunit F6, ATP5PB/subunit b, ATP5PD/subunit d, ATP5PO/subunit OSCP. ATP synthase complex consists of a soluble F(1) head domain (subunits alpha(3) and beta(3)) - the catalytic core - and a membrane F(0) domain - the membrane proton channel (subunits c, a, 8, e, f, g, k and j). These two domains are linked by a central stalk (subunits gamma, delta, and epsilon) rotating inside the F1 region and a stationary peripheral stalk (subunits F6, b, d, and OSCP).

It is found in the mitochondrion membrane. Subunit 8, of the mitochondrial membrane ATP synthase complex (F(1)F(0) ATP synthase or Complex V) that produces ATP from ADP in the presence of a proton gradient across the membrane which is generated by electron transport complexes of the respiratory chain. ATP synthase complex consist of a soluble F(1) head domain - the catalytic core - and a membrane F(1) domain - the membrane proton channel. These two domains are linked by a central stalk rotating inside the F(1) region and a stationary peripheral stalk. During catalysis, ATP synthesis in the catalytic domain of F(1) is coupled via a rotary mechanism of the central stalk subunits to proton translocation. In vivo, can only synthesize ATP although its ATP hydrolase activity can be activated artificially in vitro. Part of the complex F(0) domain. This is ATP synthase F(0) complex subunit 8 from Pelomedusa subrufa (African side-necked turtle).